A 617-amino-acid chain; its full sequence is tRNA 5-methylaminomethyl-2-thiouridine biosynthesis bifunctional protein MnmC (617 aa).

The segment at M1–P226 is tRNA (mnm(5)s(2)U34)-methyltransferase. Residues I241–G617 are FAD-dependent cmnm(5)s(2)U34 oxidoreductase.

It in the N-terminal section; belongs to the methyltransferase superfamily. tRNA (mnm(5)s(2)U34)-methyltransferase family. In the C-terminal section; belongs to the DAO family. The cofactor is FAD.

It localises to the cytoplasm. It carries out the reaction 5-aminomethyl-2-thiouridine(34) in tRNA + S-adenosyl-L-methionine = 5-methylaminomethyl-2-thiouridine(34) in tRNA + S-adenosyl-L-homocysteine + H(+). Its function is as follows. Catalyzes the last two steps in the biosynthesis of 5-methylaminomethyl-2-thiouridine (mnm(5)s(2)U) at the wobble position (U34) in tRNA. Catalyzes the FAD-dependent demodification of cmnm(5)s(2)U34 to nm(5)s(2)U34, followed by the transfer of a methyl group from S-adenosyl-L-methionine to nm(5)s(2)U34, to form mnm(5)s(2)U34. The polypeptide is tRNA 5-methylaminomethyl-2-thiouridine biosynthesis bifunctional protein MnmC (Nitrosospira multiformis (strain ATCC 25196 / NCIMB 11849 / C 71)).